Reading from the N-terminus, the 561-residue chain is Hemolysin transporter protein HpmB (561 aa).

The N-terminal stretch at 1–17 (MKKKVVLLTLLSCFSTS) is a signal peptide. Residues 77–150 (LPIKGVYIQG…GELGLYAIEG (74 aa)) enclose the POTRA domain.

It belongs to the TPS (TC 1.B.20) family.

The protein resides in the cell outer membrane. Functionally, interacts with the cell-bound hemolysin. Necessary for the extracellular secretion and activation of the hemolysin. In terms of biological role, probable member of a two partner secretion pathway (TPS) in which it mediates the secretion of hemolysin. This Proteus mirabilis protein is Hemolysin transporter protein HpmB (hpmB).